A 517-amino-acid polypeptide reads, in one-letter code: Beclin-1-like protein (517 aa).

The tract at residues 76 to 106 (LPRHKPPQSQGIPPRPRGASSPQPDATQSGK) is disordered. Residues 95 to 105 (SSPQPDATQSG) are compositionally biased toward polar residues. A coiled-coil region spans residues 172–266 (CLECMRVLSD…NRFNELEDRY (95 aa)).

This sequence belongs to the beclin family. In terms of assembly, component of a phosphatidylinositol 3-kinase (PI3K) complex composed of ATG6, SH3P2 and FREE1. Interacts with SINAT1, SINAT2, SINAT5, SINAT6, TRAF1A and TRAF1B. Interacts with TUBB8/TUB8. Component of a complex made of VPS38/USL1 and PI3K main subunits such as VPS15, ATG6/VPS30 and VPS34. Binds directly to VPS38/USL1. Post-translationally, ubiquitinated. The interaction with SINAT1 or SINAT2, and the presence of TRAF1A/MUSE14 and TRAF1B/MUSE13, mediates its proteasome-dependent degradation. Highly expressed in mature pollen grains. Expressed in roots, leaves, stems, flowers and siliques.

Its subcellular location is the cytoplasm. It localises to the cytoskeleton. In terms of biological role, required for normal plant development. Required for pollen germination. Required for autophagic activity. Required to limit the pathogen-associated cell death response. May be involved in vacuolar protein sorting. Binds to microtubules. May facilitate efficient recruitment of other ATG proteins to assemble scaffolds for autophagosome biogenesis. This is Beclin-1-like protein from Arabidopsis thaliana (Mouse-ear cress).